Reading from the N-terminus, the 389-residue chain is Apicidin F cluster transcription factor apf2 (389 aa).

Composition is skewed to polar residues over residues Met1–Asp13 and Pro75–Leu84. Disordered regions lie at residues Met1–Arg27, Pro65–Leu84, and Glu219–Pro239. Positions Thr12 to Glu38 are basic DNA-binding region. ANK repeat units lie at residues Glu241–Thr270, His274–Met303, Ser307–Arg336, and Gln357–Ile386.

Belongs to the bZIP family. Highly divergent.

The protein localises to the nucleus. Functionally, transcription factor that regulates the expression of the gene cluster that mediates the biosynthesis of apicidin F. Binds to the eight-base-pair motif 5'-TGACGTGA-3' called the 'Api-box' that is found in all promoters of the apicidin F cluster except in the promoter region of apf2 itself. The polypeptide is Apicidin F cluster transcription factor apf2 (Gibberella fujikuroi (strain CBS 195.34 / IMI 58289 / NRRL A-6831) (Bakanae and foot rot disease fungus)).